We begin with the raw amino-acid sequence, 479 residues long: NADH-quinone oxidoreductase subunit N 2 (479 aa).

14 consecutive transmembrane segments (helical) span residues Trp-9–Val-29, Leu-40–Ala-60, Arg-75–Ser-95, Tyr-110–Leu-130, Ser-131–Arg-151, Val-164–Leu-184, Leu-206–Phe-226, Pro-238–Leu-258, Trp-272–Val-292, Leu-299–Gly-319, Val-326–Met-346, Ala-371–Phe-391, Gly-404–Ile-424, and Ala-449–Leu-469.

Belongs to the complex I subunit 2 family. In terms of assembly, NDH-1 is composed of 14 different subunits. Subunits NuoA, H, J, K, L, M, N constitute the membrane sector of the complex.

The protein localises to the cell inner membrane. It catalyses the reaction a quinone + NADH + 5 H(+)(in) = a quinol + NAD(+) + 4 H(+)(out). NDH-1 shuttles electrons from NADH, via FMN and iron-sulfur (Fe-S) centers, to quinones in the respiratory chain. The immediate electron acceptor for the enzyme in this species is believed to be ubiquinone. Couples the redox reaction to proton translocation (for every two electrons transferred, four hydrogen ions are translocated across the cytoplasmic membrane), and thus conserves the redox energy in a proton gradient. The sequence is that of NADH-quinone oxidoreductase subunit N 2 from Rhizobium meliloti (strain 1021) (Ensifer meliloti).